A 419-amino-acid chain; its full sequence is MNFRGNRMINNDPLFDLLNKEQQRQQHSLELIASENFASPAVLAAQGSVLTNKYAEGYYQHRYYGGCKFIDEVEMLAITRAQQLFGARYVNVQPHSGSQANQAVYLALLKPGDKILGMSLQCGGHLTHGSPVNQSGKWFNAFHYGVDAHSGLIDMDEVETIAKRERPRLIIAGGSAYPRHYDFARFRRIADAVGAMLLVDMAHFAGLVAGGCFPSPLAYADVITATTHKTLRGPRGGMILTNDARLAKKIDSAIFPGLQGGPLMHVIAAKAVALGEALQPEFKRYAGQVIENAQAMCQQLAQRGLTLLTGGTDCHLGIIDLRPQGLTGAQVEYFLELAGITVNKNTLLGDPQPPSITSGIRIGSAACATRGMKADDFTLIADWISEIIFAIKTPNIADICADIRQKVTKLTTNYPLPYQ.

Residues L120 and 124 to 126 contribute to the (6S)-5,6,7,8-tetrahydrofolate site; that span reads GHL. K229 carries the N6-(pyridoxal phosphate)lysine modification.

The protein belongs to the SHMT family. In terms of assembly, homodimer. Requires pyridoxal 5'-phosphate as cofactor.

Its subcellular location is the cytoplasm. The enzyme catalyses (6R)-5,10-methylene-5,6,7,8-tetrahydrofolate + glycine + H2O = (6S)-5,6,7,8-tetrahydrofolate + L-serine. It functions in the pathway one-carbon metabolism; tetrahydrofolate interconversion. It participates in amino-acid biosynthesis; glycine biosynthesis; glycine from L-serine: step 1/1. In terms of biological role, catalyzes the reversible interconversion of serine and glycine with tetrahydrofolate (THF) serving as the one-carbon carrier. This reaction serves as the major source of one-carbon groups required for the biosynthesis of purines, thymidylate, methionine, and other important biomolecules. Also exhibits THF-independent aldolase activity toward beta-hydroxyamino acids, producing glycine and aldehydes, via a retro-aldol mechanism. The protein is Serine hydroxymethyltransferase 2 of Salmonella typhi.